A 120-amino-acid polypeptide reads, in one-letter code: Small ribosomal subunit protein uS11 (120 aa).

Belongs to the universal ribosomal protein uS11 family. As to quaternary structure, part of the 30S ribosomal subunit. Interacts with proteins S7 and S18. Binds to IF-3.

Its function is as follows. Located on the platform of the 30S subunit, it bridges several disparate RNA helices of the 16S rRNA. Forms part of the Shine-Dalgarno cleft in the 70S ribosome. The chain is Small ribosomal subunit protein uS11 from Neorickettsia sennetsu (strain ATCC VR-367 / Miyayama) (Ehrlichia sennetsu).